A 672-amino-acid polypeptide reads, in one-letter code: uncharacterized protein (672 aa).

It belongs to the MG032/MG096/MG288 family.

This is an uncharacterized protein from Mycoplasma pneumoniae (strain ATCC 29342 / M129 / Subtype 1) (Mycoplasmoides pneumoniae).